The sequence spans 983 residues: Probable beta-galactosidase C (983 aa).

The signal sequence occupies residues 1–23; the sequence is MRIFSFLFLLLLGILTGQGLVSG. Tyr82, Asn127, Ala128, Glu129, and Asn187 together coordinate substrate. Residue Glu188 is the Proton donor of the active site. Asn197 carries N-linked (GlcNAc...) asparagine glycosylation. Residue Tyr251 coordinates substrate. Cys257 and Cys304 form a disulfide bridge. A glycan (N-linked (GlcNAc...) asparagine) is linked at Asn276. Glu287 serves as the catalytic Nucleophile. Residue Tyr353 participates in substrate binding. N-linked (GlcNAc...) asparagine glycosylation is found at Asn391, Asn434, Asn466, Asn516, Asn601, Asn676, Asn714, Asn719, and Asn804.

This sequence belongs to the glycosyl hydrolase 35 family.

The protein localises to the secreted. The enzyme catalyses Hydrolysis of terminal non-reducing beta-D-galactose residues in beta-D-galactosides.. Cleaves beta-linked terminal galactosyl residues from gangliosides, glycoproteins, and glycosaminoglycans. The sequence is that of Probable beta-galactosidase C (lacC) from Neosartorya fischeri (strain ATCC 1020 / DSM 3700 / CBS 544.65 / FGSC A1164 / JCM 1740 / NRRL 181 / WB 181) (Aspergillus fischerianus).